Consider the following 278-residue polypeptide: Phosphoenolpyruvate carboxylase kinase 2 (278 aa).

Positions 11–269 (YQLCDEIGRG…AEDALRHSWM (259 aa)) constitute a Protein kinase domain. ATP is bound by residues 17–25 (IGRGRFGTI) and lysine 40. Aspartate 137 serves as the catalytic Proton acceptor.

This sequence belongs to the protein kinase superfamily. Ser/Thr protein kinase family. In terms of tissue distribution, expressed in flowers and roots, and at lower levels in cauline leaves. Barely detectable in rosette leaves and stems.

The enzyme catalyses L-seryl-[protein] + ATP = O-phospho-L-seryl-[protein] + ADP + H(+). It catalyses the reaction L-threonyl-[protein] + ATP = O-phospho-L-threonyl-[protein] + ADP + H(+). Functionally, calcium-independent kinase involved in light-dependent phosphoenolpyruvate carboxylase phosphorylation. In Arabidopsis thaliana (Mouse-ear cress), this protein is Phosphoenolpyruvate carboxylase kinase 2 (PPCK2).